Here is a 1357-residue protein sequence, read N- to C-terminus: DNA-directed RNA polymerase subunit beta (1357 aa).

The protein belongs to the RNA polymerase beta chain family. The RNAP catalytic core consists of 2 alpha, 1 beta, 1 beta' and 1 omega subunit. When a sigma factor is associated with the core the holoenzyme is formed, which can initiate transcription.

It carries out the reaction RNA(n) + a ribonucleoside 5'-triphosphate = RNA(n+1) + diphosphate. DNA-dependent RNA polymerase catalyzes the transcription of DNA into RNA using the four ribonucleoside triphosphates as substrates. In Acinetobacter baumannii (strain ATCC 17978 / DSM 105126 / CIP 53.77 / LMG 1025 / NCDC KC755 / 5377), this protein is DNA-directed RNA polymerase subunit beta.